Here is a 588-residue protein sequence, read N- to C-terminus: Cation channel sperm-associated protein 2 (588 aa).

The Cytoplasmic segment spans residues 1–106; that stretch reads MAQEQGHFQL…LWAGWVLDSS (106 aa). Residues 107–129 form a helical membrane-spanning segment; that stretch reads VFSKFIISLIFLNTFVLMVEIEL. Residues 130–138 lie on the Extracellular side of the membrane; the sequence is MESTNTALW. The helical transmembrane segment at 139–164 threads the bilayer; sequence PVKLALEVADWFILLSFIVEILLMWL. The Cytoplasmic segment spans residues 165–173; sequence ASFSLFWKD. Residues 174-198 traverse the membrane as a helical segment; sequence AWNVFDFFVTLLSLLPELVVLLGVP. The Extracellular portion of the chain corresponds to 199–201; that stretch reads AHS. A helical membrane pass occupies residues 202-220; sequence VWLQLLRVCRVLRSLKLFA. Over 221–237 the chain is Cytoplasmic; the sequence is RFRQIKVILLALVRALK. A helical membrane pass occupies residues 238–260; sequence SMTFLLMLLLIFFYIFAVTGVYF. At 261–279 the chain is on the extracellular side; it reads FREYSRSTIEGLEYNMFFS. An intramembrane region (helical; Pore-forming) is located at residues 280 to 292; that stretch reads DLLNSLVTVFILF. Over 293–312 the chain is Extracellular; the sequence is TLDHWYAVLQDIWKVPESSR. The chain crosses the membrane as a helical span at residues 313 to 339; it reads VFSSIYVILWLLLGSIIFRNIIVAMMV. Topologically, residues 340–588 are cytoplasmic; that stretch reads TNFQNIRSEL…VQALMSFEDK (249 aa). The disordered stretch occupies residues 376-512; sequence SESLRGTSLG…YPVSHSISSH (137 aa). Acidic residues predominate over residues 390–439; that stretch reads DIIETSDASDDDDDDDDDDDDDDDDDDDKSDATESDNEESDSENSESENS. Residues 440 to 502 are compositionally biased toward basic and acidic residues; it reads ESEKIDPEKD…KVKEESKEKA (63 aa).

Belongs to the cation channel sperm-associated (TC 1.A.1.19) family. In terms of assembly, component of the CatSper complex or CatSpermasome composed of the core pore-forming members CATSPER1, CATSPER2, CATSPER3 and CATSPER4 as well as auxiliary members CATSPERB, CATSPERG2, CATSPERD, CATSPERE, CATSPERZ, C2CD6/CATSPERT, SLCO6C1, TMEM249, TMEM262 and EFCAB9. HSPA1 may be an additional auxiliary complex member. The core complex members CATSPER1, CATSPER2, CATSPER3 and CATSPER4 form a heterotetrameric channel. The auxiliary CATSPERB, CATSPERG2, CATSPERD and CATSPERE subunits form a pavilion-like structure over the pore which stabilizes the complex through interactions with CATSPER4, CATSPER3, CATSPER1 and CATSPER2 respectively. SLCO6C1 interacts with CATSPERE and TMEM262/CATSPERH interacts with CATSPERB, further stabilizing the complex. C2CD6/CATSPERT interacts at least with CATSPERD and is required for targeting the CatSper complex in the flagellar membrane. Interacts with Ca(v)3.3/CACNA1I, leading to suppression of T-type calcium channel activity. As to expression, testis-specific.

The protein localises to the cell projection. Its subcellular location is the cilium. It localises to the flagellum membrane. The enzyme catalyses Ca(2+)(in) = Ca(2+)(out). With respect to regulation, in contrast to the human ortholog, not activated by progesterone. Activated by intracellular alkalinization. Its function is as follows. Pore-forming subunit of the CatSper complex, a sperm-specific voltage-gated calcium channel that plays a central role in sperm cell hyperactivation. Controls calcium entry to mediate the hyperactivated motility, a step needed for sperm motility which is essential late in the preparation of sperm for fertilization. This chain is Cation channel sperm-associated protein 2 (Catsper2), found in Mus musculus (Mouse).